A 66-amino-acid chain; its full sequence is Large ribosomal subunit protein bL33c (66 aa).

This sequence belongs to the bacterial ribosomal protein bL33 family.

Its subcellular location is the plastid. It is found in the chloroplast. The polypeptide is Large ribosomal subunit protein bL33c (Calycanthus floridus var. glaucus (Eastern sweetshrub)).